A 168-amino-acid polypeptide reads, in one-letter code: uncharacterized protein (168 aa).

Residues 1-15 (MKRIISSSKSLKQLS) are compositionally biased toward low complexity. The disordered stretch occupies residues 1–107 (MKRIISSSKS…NNNNNNNNNN (107 aa)). Acidic residues predominate over residues 33-47 (SDSDSDSDSDSDSDS). The segment covering 48 to 107 (DSNSNSNSNSNSNSNSNSNSNSNSNSNNNNNNTNNNNNNNNNNNNNNNNNNNNNNNNNNN) has biased composition (low complexity).

This is an uncharacterized protein from Dictyostelium discoideum (Social amoeba).